We begin with the raw amino-acid sequence, 380 residues long: Succinyl-diaminopimelate desuccinylase (380 aa).

Histidine 71 contributes to the Zn(2+) binding site. Aspartate 73 is an active-site residue. A Zn(2+)-binding site is contributed by aspartate 104. Glutamate 138 (proton acceptor) is an active-site residue. Zn(2+) contacts are provided by glutamate 139, glutamate 167, and histidine 353.

Belongs to the peptidase M20A family. DapE subfamily. As to quaternary structure, homodimer. Requires Zn(2+) as cofactor. The cofactor is Co(2+).

The enzyme catalyses N-succinyl-(2S,6S)-2,6-diaminopimelate + H2O = (2S,6S)-2,6-diaminopimelate + succinate. Its pathway is amino-acid biosynthesis; L-lysine biosynthesis via DAP pathway; LL-2,6-diaminopimelate from (S)-tetrahydrodipicolinate (succinylase route): step 3/3. Functionally, catalyzes the hydrolysis of N-succinyl-L,L-diaminopimelic acid (SDAP), forming succinate and LL-2,6-diaminopimelate (DAP), an intermediate involved in the bacterial biosynthesis of lysine and meso-diaminopimelic acid, an essential component of bacterial cell walls. This chain is Succinyl-diaminopimelate desuccinylase, found in Shewanella baltica (strain OS185).